The sequence spans 209 residues: Thymidine kinase (209 aa).

ATP-binding positions include 9 to 16 (AAMNAGKS) and 88 to 91 (DEAQ). The active-site Proton acceptor is the E89. 4 residues coordinate Zn(2+): C146, C148, C183, and H186.

The protein belongs to the thymidine kinase family. In terms of assembly, homotetramer.

It localises to the cytoplasm. The catalysed reaction is thymidine + ATP = dTMP + ADP + H(+). The sequence is that of Thymidine kinase from Legionella pneumophila (strain Paris).